A 500-amino-acid polypeptide reads, in one-letter code: Trehalose-6-phosphate synthase (500 aa).

Arg-28 is a D-glucose 6-phosphate binding site. Residue 48–49 (GG) coordinates UDP-alpha-D-glucose. Residues Tyr-108 and Asp-162 each contribute to the D-glucose 6-phosphate site. The UDP-alpha-D-glucose site is built by Arg-304 and Lys-309. Position 342 (Arg-342) interacts with D-glucose 6-phosphate. 407-411 (LVAKE) lines the UDP-alpha-D-glucose pocket.

This sequence belongs to the glycosyltransferase 20 family. Homotetramer.

The enzyme catalyses ADP-alpha-D-glucose + D-glucose 6-phosphate = alpha,alpha-trehalose 6-phosphate + ADP + H(+). It carries out the reaction CDP-alpha-D-glucose + D-glucose 6-phosphate = alpha,alpha-trehalose 6-phosphate + CDP + H(+). It catalyses the reaction GDP-alpha-D-glucose + D-glucose 6-phosphate = alpha,alpha-trehalose 6-phosphate + GDP + H(+). The catalysed reaction is TDP-alpha-D-glucose + D-glucose 6-phosphate = 5-methyl-UDP + alpha,alpha-trehalose 6-phosphate + H(+). The enzyme catalyses D-glucose 6-phosphate + UDP-alpha-D-glucose = alpha,alpha-trehalose 6-phosphate + UDP + H(+). It participates in glycan biosynthesis; trehalose biosynthesis. Functionally, probably involved in the osmoprotection via the biosynthesis of trehalose and in the production of glycogen and alpha-glucan via the TreS-Pep2 branch involved in the biosynthesis of maltose-1-phosphate (M1P). Catalyzes the transfer of glucose from UDP-glucose (UDP-Glc) to D-glucose 6-phosphate (Glc-6-P) to form trehalose-6-phosphate. Probably also able to use ADP-Glc, CDP-Glc, GDP-Glc and TDP-Glc as glucosyl donors. In Mycobacterium tuberculosis (strain CDC 1551 / Oshkosh), this protein is Trehalose-6-phosphate synthase.